The following is a 354-amino-acid chain: Uroporphyrinogen decarboxylase (354 aa).

Substrate-binding positions include 27–31 (RQAGR), Asp77, Tyr154, Thr209, and His327.

It belongs to the uroporphyrinogen decarboxylase family. As to quaternary structure, homodimer.

The protein resides in the cytoplasm. It carries out the reaction uroporphyrinogen III + 4 H(+) = coproporphyrinogen III + 4 CO2. It participates in porphyrin-containing compound metabolism; protoporphyrin-IX biosynthesis; coproporphyrinogen-III from 5-aminolevulinate: step 4/4. Functionally, catalyzes the decarboxylation of four acetate groups of uroporphyrinogen-III to yield coproporphyrinogen-III. This is Uroporphyrinogen decarboxylase from Klebsiella pneumoniae subsp. pneumoniae (strain ATCC 700721 / MGH 78578).